Here is a 993-residue protein sequence, read N- to C-terminus: Importin subunit beta-5 (993 aa).

The Importin N-terminal domain maps to alanine 24 to serine 100.

It is found in the nucleus. Its function is as follows. Required for nuclear protein import and mediates docking of import substrate to distinct nucleoporins. Serves a receptor for nuclear localization signals. Mediates the nuclear import of TATA-binding protein (TBP) and of histones H2A and H2B. This chain is Importin subunit beta-5 (kap114), found in Schizosaccharomyces pombe (strain 972 / ATCC 24843) (Fission yeast).